The chain runs to 359 residues: Protein mab-21-like 2 (359 aa).

It belongs to the mab-21 family.

Its subcellular location is the nucleus. It is found in the cytoplasm. Required for several aspects of embryonic development including normal development of the eye. This is Protein mab-21-like 2 (mab21l2) from Xenopus tropicalis (Western clawed frog).